A 238-amino-acid polypeptide reads, in one-letter code: Probable transcriptional regulatory protein VIBHAR_07036 (238 aa).

This sequence belongs to the TACO1 family.

It localises to the cytoplasm. The sequence is that of Probable transcriptional regulatory protein VIBHAR_07036 from Vibrio campbellii (strain ATCC BAA-1116).